The sequence spans 150 residues: Macrodomain Ter protein (150 aa).

The protein belongs to the MatP family. Homodimer.

The protein localises to the cytoplasm. In terms of biological role, required for spatial organization of the terminus region of the chromosome (Ter macrodomain) during the cell cycle. Prevents early segregation of duplicated Ter macrodomains during cell division. Binds specifically to matS, which is a 13 bp signature motif repeated within the Ter macrodomain. This chain is Macrodomain Ter protein, found in Escherichia coli O81 (strain ED1a).